Consider the following 340-residue polypeptide: PI-PLC X domain-containing protein 2 (340 aa).

The region spanning 42-215 is the PI-PLC X-box domain; that stretch reads HLHNVPLSNL…KYQVLIFYHC (174 aa). Residues histidine 57 and histidine 132 contribute to the active site.

In terms of tissue distribution, expressed at highest levels in brain, followed by stomach and small intestine. Detected at low levels in kidney, ey, thymus and slkeletal muscle.

It is found in the nucleus. The enzyme catalyses a 1,2-diacyl-sn-glycero-3-phospho-(1D-myo-inositol) + H2O = 1D-myo-inositol 1-phosphate + a 1,2-diacyl-sn-glycerol + H(+). In terms of biological role, catalyzes the hydrolysis of inositol from phosphatidylinositol (1,2-diacyl-sn-glycero-3-phospho-(1D-myo-inositol), PI). Could also hydrolyze various multi-phosphorylated derivatives of PI, such as phosphatidylinositol-4,5 bisphosphate (PIP2), releasing inositol-1,4,5-trisphosphate (IP3) and the protein kinase C activator diacylglycerol (DAG), therefore mediating cell signaling. The chain is PI-PLC X domain-containing protein 2 (Plcxd2) from Mus musculus (Mouse).